Consider the following 540-residue polypeptide: Malolactic enzyme (540 aa).

Residue Tyr90 is the Proton donor of the active site. Lys163 (proton acceptor) is an active-site residue. A substrate-binding site is contributed by Lys163. The Mn(2+) site is built by Glu234, Asp235, and Asp258. NAD(+) contacts are provided by residues 291 to 294 (GGSA), Asn403, and Asn448. Asn448 lines the substrate pocket.

It belongs to the malic enzymes family. Homodimer. Mn(2+) serves as cofactor. It depends on NAD(+) as a cofactor.

The enzyme catalyses (S)-malate + H(+) = (S)-lactate + CO2. In terms of biological role, involved in the malolactic fermentation (MLF) of wine, which results in a natural decrease in acidity and favorable changes in wine flavors. Catalyzes the decarboxylation of L-malate to L-lactate. The chain is Malolactic enzyme from Lactococcus lactis subsp. lactis (strain IL1403) (Streptococcus lactis).